The primary structure comprises 213 residues: Uridine kinase (213 aa).

15–22 lines the ATP pocket; that stretch reads GASASGKS.

It belongs to the uridine kinase family.

The protein resides in the cytoplasm. The catalysed reaction is uridine + ATP = UMP + ADP + H(+). It catalyses the reaction cytidine + ATP = CMP + ADP + H(+). Its pathway is pyrimidine metabolism; CTP biosynthesis via salvage pathway; CTP from cytidine: step 1/3. It participates in pyrimidine metabolism; UMP biosynthesis via salvage pathway; UMP from uridine: step 1/1. In Yersinia pseudotuberculosis serotype O:1b (strain IP 31758), this protein is Uridine kinase.